The following is a 288-amino-acid chain: Nucleotide-binding protein ASA_0318 (288 aa).

Residue 8–15 coordinates ATP; it reads GRSGSGKT. A GTP-binding site is contributed by 56–59; sequence DVRN.

Belongs to the RapZ-like family.

Its function is as follows. Displays ATPase and GTPase activities. The sequence is that of Nucleotide-binding protein ASA_0318 from Aeromonas salmonicida (strain A449).